Consider the following 3658-residue polypeptide: Serine/threonine-protein kinase SMG1 (3658 aa).

Disordered stretches follow at residues 1 to 99 and 116 to 142; these read MSRR…TYGR and FTSV…MSYS. A compositionally biased stretch (polar residues) spans 24 to 33; the sequence is NDWQPRTDSA. Basic and acidic residues-rich tracts occupy residues 67-84 and 127-136; these read QRHD…DEKG and ATKDMRKSQE. Position 171 is an N6-acetyllysine (lysine 171). The FAT domain maps to 1281–1864; sequence RELQKSIEVQ…LYPAIVGTIS (584 aa). An HEAT repeat occupies 1815 to 1850; that stretch reads APWRGIIPQLFSRLNHPEVYVRQSICNLLCRVAQDS. Residues 1896 to 1917 form a disordered region; the sequence is ECEGGSPPASQDSNKDEPKSGL. The PI3K/PI4K catalytic domain occupies 2122-2461; it reads VGGTITILPT…MEREITRSLF (340 aa). Positions 2128-2134 are G-loop; the sequence is ILPTKTK. The interval 2330-2338 is catalytic loop; that stretch reads GLGDRHLDN. The tract at residues 2350–2374 is activation loop; sequence HIDYNVCFEKGKSLRVPEKVPFRMT. Threonine 3547 is subject to Phosphothreonine. 2 positions are modified to phosphoserine: serine 3553 and serine 3567. Residues 3565–3576 are compositionally biased toward polar residues; it reads ATSADTPPSTIP. Residues 3565–3588 are disordered; the sequence is ATSADTPPSTIPGTGKSIACSPKK. A phosphothreonine mark is found at threonine 3570 and threonine 3574. An FATC domain is found at 3626–3658; that stretch reads RRMSVAEQVDYVIKEATNLDNLAQLYEGWTAWV.

It belongs to the PI3/PI4-kinase family. As to quaternary structure, component of the SMG1C complex composed of SMG1, SMG8 and SMG9; the recruitment of SMG8 to SMG1 N-terminus induces a large conformational change in the SMG1 C-terminal head domain containing the catalytic domain. Component of the transient SURF (SMG1-UPF1-eRF1-eRF3) complex. Part of a complex composed of SMG1, DHX34 and UPF1; within the complex DHX34 acts as a scaffolding protein to facilitate SMG1 phosphorylation of UPF1. Interacts with PRKCI. Interacts with TELO2 and TTI1. Interacts with RUVBL1 and RUVBL2. Interacts with DHX34 (via C-terminus); the interaction is RNA-independent. Mn(2+) is required as a cofactor. Post-translationally, autophosphorylated.

It localises to the nucleus. Its subcellular location is the cytoplasm. It catalyses the reaction L-seryl-[protein] + ATP = O-phospho-L-seryl-[protein] + ADP + H(+). The catalysed reaction is L-threonyl-[protein] + ATP = O-phospho-L-threonyl-[protein] + ADP + H(+). Inhibited by caffeine, LY294002 and wortmannin. In terms of biological role, serine/threonine protein kinase involved in both mRNA surveillance and genotoxic stress response pathways. Recognizes the substrate consensus sequence [ST]-Q. Plays a central role in nonsense-mediated decay (NMD) of mRNAs containing premature stop codons by phosphorylating UPF1/RENT1. Recruited by release factors to stalled ribosomes together with SMG8 and SMG9 (forming the SMG1C protein kinase complex), and UPF1 to form the transient SURF (SMG1-UPF1-eRF1-eRF3) complex. In EJC-dependent NMD, the SURF complex associates with the exon junction complex (EJC) through UPF2 and allows the formation of an UPF1-UPF2-UPF3 surveillance complex which is believed to activate NMD. Also acts as a genotoxic stress-activated protein kinase that displays some functional overlap with ATM. Can phosphorylate p53/TP53 and is required for optimal p53/TP53 activation after cellular exposure to genotoxic stress. Its depletion leads to spontaneous DNA damage and increased sensitivity to ionizing radiation (IR). May activate PRKCI but not PRKCZ. The sequence is that of Serine/threonine-protein kinase SMG1 from Mus musculus (Mouse).